A 412-amino-acid chain; its full sequence is Alanyl-tRNA editing protein Aarsd1 (412 aa).

Positions 108, 112, 208, and 212 each coordinate Zn(2+).

The protein belongs to the class-II aminoacyl-tRNA synthetase family. Alax-L subfamily. Zn(2+) serves as cofactor.

The protein localises to the cytoplasm. Its function is as follows. Functions in trans to edit the amino acid moiety from incorrectly charged tRNA(Ala). The protein is Alanyl-tRNA editing protein Aarsd1 (aarsd1) of Danio rerio (Zebrafish).